The sequence spans 276 residues: Capsid protein (276 aa).

The tract at residues 1-85 is r domain, interaction with RNA; that stretch reads MAGKKNNNNG…PIVPKFSNRG (85 aa). The interval 86 to 266 is s domain, virion shell; the sequence is DSTIVRNTEI…DLFIKYVIEF (181 aa). Positions 267–276 are p domain, projecting; that stretch reads IEPINPTMNV.

Belongs to the icosahedral plant coat protein family. As to quaternary structure, homomultimer.

The protein localises to the virion. Its function is as follows. Capsid protein self-assembles to form an icosahedral capsid with a T=3 symmetry, about 28 nm in diameter, and consisting of 180 capsid proteins. This Tobacco necrosis virus (strain A) (TNV-A) protein is Capsid protein.